A 237-amino-acid chain; its full sequence is LexA repressor (237 aa).

The segment at residues 26–46 is a DNA-binding region (H-T-H motif); the sequence is FDEMKEALDLRSKSGIHRLIT. Active-site for autocatalytic cleavage activity residues include serine 158 and lysine 196.

It belongs to the peptidase S24 family. Homodimer.

The enzyme catalyses Hydrolysis of Ala-|-Gly bond in repressor LexA.. Represses a number of genes involved in the response to DNA damage (SOS response), including recA and lexA. In the presence of single-stranded DNA, RecA interacts with LexA causing an autocatalytic cleavage which disrupts the DNA-binding part of LexA, leading to derepression of the SOS regulon and eventually DNA repair. The protein is LexA repressor of Xanthobacter autotrophicus (strain ATCC BAA-1158 / Py2).